Reading from the N-terminus, the 588-residue chain is Intracellular maltogenic amylase (588 aa).

Residues asparagine 149, serine 155, glycine 174, and aspartate 176 each coordinate Ca(2+). Substrate contacts are provided by histidine 249 and arginine 325. Catalysis depends on aspartate 327, which acts as the Nucleophile. Residue glutamate 356 is the Proton donor of the active site. Substrate is bound by residues 422–423, aspartate 467, and arginine 471; that span reads HD.

It belongs to the glycosyl hydrolase 13 family. BbmA subfamily. Monomer or homodimer; in equilibrium. Ca(2+) serves as cofactor.

It is found in the cytoplasm. Its function is as follows. Hydrolyzes beta-cyclodextrin to maltose and glucose, soluble starch to maltose and glucose, and pullulan to panose with trace amounts of maltose and glucose. It is also able to hydrolyze acarbose. Can also exhibit a transglycosylation activity transferring glucose or maltose to another moiety of sugars by forming alpha-(1,6)- and alpha-(1,3)-glycosidic linkages upon the hydrolysis of substrate at concentrations of 5% or higher. This Bacillus subtilis (strain 168) protein is Intracellular maltogenic amylase (bbmA).